The following is a 225-amino-acid chain: Plasma membrane-associated cation-binding protein 1 (225 aa).

G2 carries the N-myristoyl glycine lipid modification. Position 32 is a phosphothreonine (T32). Position 107 is a phosphoserine (S107). Over residues 140 to 197 the composition is skewed to basic and acidic residues; that stretch reads PVEEVKAEEPAKTEEPAKTEGTSGEKEEIVEETKKGETPETAVVEEKKPEVEEKKEEA. The interval 140-225 is disordered; that stretch reads PVEEVKAEEP…TAPVAEPPKP (86 aa). Phosphothreonine occurs at positions 152 and 177.

Belongs to the DREPP family. In terms of assembly, interacts with Turnip mosaic virus (TuMV) P3N-PIPO. The cofactor is Cu(2+). As to expression, mostly expressed in the basal region of hypocotyls. Expressed in seedlings, roots, shoots, stems, leaves (e.g. in epidermis and vascular tissues), flowers (e.g. in pistils and anthers) and siliques (at protein level).

It localises to the cell membrane. The protein localises to the cytoplasm. The protein resides in the cytoskeleton. It is found in the cell junction. Its subcellular location is the plasmodesma. Its function is as follows. May be involved in intracellular signaling through interaction with PtdInsPs and calmodulin (CaM); may keep PtdInsPs attached to the plasma membrane until Ca(2+)-CaM reaches a competitive concentration subsequent to an increase triggered by a stimulus, thus leading to PtdInsPs release and subsequent activation of InsPs-dependent signaling cascade. Interacts competitively at the N-terminus with calcium ions and CaM (in a calcium-dependent manner), and with the phosphatidylinositol phosphates PtdIns(3,4,5)P(3), PtdIns(3,4)P(2), PtdIns(4,5)P(2) and PtdIns(3,5)P(2). Also binds weakly to PtdIns(3)P, PtdIns(4)P and PtdIns(5)P. Negative regulator of hypocotyl cell elongation by destabilizing cortical microtubules in a calcium-dependent manner. Binds directly to and destabilized microtubules to enhance microtubule depolymerization when cytoplasmic calcium increases. In case of Turnip mosaic virus (TuMV) infection, confers sensitivity by promoting viral cell-to-cell movement through interaction with viral P3N-PIPO. The sequence is that of Plasma membrane-associated cation-binding protein 1 (PCAP1) from Arabidopsis thaliana (Mouse-ear cress).